We begin with the raw amino-acid sequence, 219 residues long: Glutathione S-transferase (219 aa).

One can recognise a GST N-terminal domain in the interval 2–89 (SQPILGYWDI…YLGRKYKLNG (88 aa)). Glutathione is bound by residues 8–9 (YW), 44–47 (RSEW), Lys-51, 60–61 (NL), and 73–74 (QT). Positions 91 to 207 (NDHEEIRISM…YIKKQQPKTF (117 aa)) constitute a GST C-terminal domain. Residue Tyr-117 participates in substrate binding.

Belongs to the GST superfamily. Mu family. In terms of assembly, homodimer.

It localises to the cytoplasm. It carries out the reaction RX + glutathione = an S-substituted glutathione + a halide anion + H(+). This Dermatophagoides pteronyssinus (European house dust mite) protein is Glutathione S-transferase.